Consider the following 478-residue polypeptide: Ribosomal RNA small subunit methyltransferase F (478 aa).

S-adenosyl-L-methionine-binding positions include A123–K129, E147, D174, and D192. The Nucleophile role is filled by C245.

Belongs to the class I-like SAM-binding methyltransferase superfamily. RsmB/NOP family.

It localises to the cytoplasm. The catalysed reaction is cytidine(1407) in 16S rRNA + S-adenosyl-L-methionine = 5-methylcytidine(1407) in 16S rRNA + S-adenosyl-L-homocysteine + H(+). Specifically methylates the cytosine at position 1407 (m5C1407) of 16S rRNA. In Vibrio parahaemolyticus serotype O3:K6 (strain RIMD 2210633), this protein is Ribosomal RNA small subunit methyltransferase F.